Consider the following 782-residue polypeptide: Protein VAC14 homolog (782 aa).

N-acetylmethionine is present on methionine 1. 4 HEAT repeats span residues 5 to 42 (KDFA…EFVA), 89 to 126 (LYLK…VARG), 171 to 208 (FDLV…VPDI), and 212 to 249 (DYLP…EIKK). A Phosphothreonine modification is found at threonine 11. 2 disordered regions span residues 335–372 (EDDE…DGSC) and 471–517 (SSPA…LECS). An HEAT 5 repeat occupies 438–475 (RHTDSLFPILLQTLSDESDEVILKDLEVLAEIASSPAG). The segment covering 478 to 488 (DDPGPLDGPDL) has biased composition (low complexity). A Phosphothreonine modification is found at threonine 499. Residues 506–517 (LNTSGTKGLECS) show a composition bias toward polar residues. Position 517 is a phosphoserine (serine 517). The HEAT 6 repeat unit spans residues 560–598 (LNAENIFHSMADILLREEDLKFASTMVHALNTILLTSTE). Position 743 is a phosphoserine (serine 743). The mediates interaction with the PDZ domain of NOS1 stretch occupies residues 773 to 777 (GDHLD).

Belongs to the VAC14 family. As to quaternary structure, forms pentamers. Component of the PI(3,5)P2 regulatory complex/PAS complex, at least composed of PIKFYVE, FIG4 and VAC14. VAC14 nucleates the assembly of the complex and serves as a scaffold by pentamerizing into a star-shaped structure, which can bind a single copy each of PIKFYVE and FIG4 and coordinates their activities. Interacts with NOS1. (Microbial infection) Interacts with HTLV-1 Tax. Ubiquitously expressed.

It is found in the endosome membrane. The protein resides in the microsome membrane. In terms of biological role, scaffold protein component of the PI(3,5)P2 regulatory complex which regulates both the synthesis and turnover of phosphatidylinositol 3,5-bisphosphate (PtdIns(3,5)P2). Pentamerizes into a star-shaped structure and nucleates the assembly of the complex. The pentamer binds a single copy each of PIKFYVE and FIG4 and coordinates both PIKfyve kinase activity and FIG4 phosphatase activity, being required to maintain normal levels of phosphatidylinositol 3-phosphate (PtdIns(3)P) and phosphatidylinositol 5-phosphate (PtdIns(5)P). Plays a role in the biogenesis of endosome carrier vesicles (ECV) / multivesicular bodies (MVB) transport intermediates from early endosomes. This is Protein VAC14 homolog (VAC14) from Homo sapiens (Human).